Consider the following 492-residue polypeptide: Glutamyl-tRNA(Gln) amidotransferase subunit A (492 aa).

Catalysis depends on charge relay system residues lysine 84 and serine 159. Residue serine 183 is the Acyl-ester intermediate of the active site.

It belongs to the amidase family. GatA subfamily. In terms of assembly, heterotrimer of A, B and C subunits.

The enzyme catalyses L-glutamyl-tRNA(Gln) + L-glutamine + ATP + H2O = L-glutaminyl-tRNA(Gln) + L-glutamate + ADP + phosphate + H(+). Functionally, allows the formation of correctly charged Gln-tRNA(Gln) through the transamidation of misacylated Glu-tRNA(Gln) in organisms which lack glutaminyl-tRNA synthetase. The reaction takes place in the presence of glutamine and ATP through an activated gamma-phospho-Glu-tRNA(Gln). This is Glutamyl-tRNA(Gln) amidotransferase subunit A from Anaeromyxobacter dehalogenans (strain 2CP-C).